The sequence spans 565 residues: Heme/hemopexin transporter protein HuxB (565 aa).

Positions 1–26 are cleaved as a signal peptide; sequence MKMRPRYSVIASAVSLGFVLSKSVMA. The region spanning 73-150 is the POTRA domain; it reads FPLKQVQILD…GTVKILLLKG (78 aa).

Belongs to the TPS (TC 1.B.20) family.

The protein resides in the cell outer membrane. Functionally, likely functions in the release of soluble HxuA from the cell. In terms of biological role, probable member of a two partner secretion pathway (TPS) in which it mediates the secretion of HuxA. This chain is Heme/hemopexin transporter protein HuxB (hxuB), found in Haemophilus influenzae (strain ATCC 51907 / DSM 11121 / KW20 / Rd).